The sequence spans 248 residues: Trypsin II-P29 (248 aa).

A signal peptide spans 1–16; sequence MKFLFLILSCLGAAVA. Positions 17 to 25 are cleaved as a propeptide — activation peptide; that stretch reads FPGGADDDK. Residues 26 to 246 enclose the Peptidase S1 domain; that stretch reads IVGGYTCPEH…YVDWIQETIA (221 aa). 6 cysteine pairs are disulfide-bonded: Cys32-Cys162, Cys50-Cys66, Cys134-Cys235, Cys141-Cys208, Cys173-Cys187, and Cys198-Cys222. Catalysis depends on His65, which acts as the Charge relay system. The Ca(2+) site is built by Glu77, Asn79, Val82, and Glu87. Asp109 (charge relay system) is an active-site residue. The active-site Charge relay system is the Ser202.

The protein belongs to the peptidase S1 family. Requires Ca(2+) as cofactor. As to expression, high levels are seen in the pancreas while lower levels are found in the liver, spleen and thymus.

The protein localises to the secreted. The protein resides in the extracellular space. It carries out the reaction Preferential cleavage: Arg-|-Xaa, Lys-|-Xaa.. The protein is Trypsin II-P29 of Gallus gallus (Chicken).